Reading from the N-terminus, the 460-residue chain is MKEIKNILIVSFGFLLLFTAFGGLQSLQSSLNSDEGLGVASLSVIYAALIVSSVFVPPIVIKKIGCKWTIVASMCCYITYSLGNFYASWYTLIPTSLILGFGGAPLWAAKCTYLTESGNRYAEKKGKLAKDIVNQYFGLFFLIFQSSGVWGNLISSLIFGQNYPAGSNDSFTDYSQCGANDCPGTNFGNGTGTTKPTKSLIYTLLGVYTGSGVLAVILIAVFLDTINLRTDQLKPGTKEESFSKKILATVRHLKDKRQCLLIPLTMYSGFEQGFLSGDYTKSYVTCSLGIHFVGYVMICFAATNAVCSLLFGQLSKYTGRICLFILAAVSNAACVIALLLWEPYPNDFAVFFIFPAIWGMADAIWQTQTNALYGVLFDEHKEAAFANYRLWESLGFVIAYGYSTFLCVSVKLYILLAVLLIAIVFYGFVEYLEHVEHKKAASTTISQNEDSNSLCKQTAM.

A run of 5 helical transmembrane segments spans residues 7 to 27 (ILIV…LQSL), 41 to 61 (SLSV…PIVI), 68 to 88 (WTIV…FYAS), 89 to 109 (WYTL…LWAA), and 139 to 159 (LFFL…SLIF). N-linked (GlcNAc...) asparagine glycans are attached at residues Asn-168 and Asn-189. 6 consecutive transmembrane segments (helical) span residues 203 to 223 (TLLG…AVFL), 292 to 312 (FVGY…LLFG), 321 to 341 (ICLF…LLLW), 345 to 365 (PNDF…DAIW), 390 to 410 (LWES…CVSV), and 412 to 432 (LYIL…VEYL).

This sequence belongs to the unc-93 family.

It is found in the membrane. The polypeptide is Protein unc-93 homolog A (unc93a) (Xenopus laevis (African clawed frog)).